The primary structure comprises 285 residues: 4-diphosphocytidyl-2-C-methyl-D-erythritol kinase (285 aa).

The active site involves Lys12. 95–105 is an ATP binding site; that stretch reads PMGGGVGGGSS. The active site involves Asp137.

The protein belongs to the GHMP kinase family. IspE subfamily.

The enzyme catalyses 4-CDP-2-C-methyl-D-erythritol + ATP = 4-CDP-2-C-methyl-D-erythritol 2-phosphate + ADP + H(+). The protein operates within isoprenoid biosynthesis; isopentenyl diphosphate biosynthesis via DXP pathway; isopentenyl diphosphate from 1-deoxy-D-xylulose 5-phosphate: step 3/6. Functionally, catalyzes the phosphorylation of the position 2 hydroxy group of 4-diphosphocytidyl-2C-methyl-D-erythritol. This is 4-diphosphocytidyl-2-C-methyl-D-erythritol kinase from Actinobacillus pleuropneumoniae serotype 7 (strain AP76).